The chain runs to 368 residues: Reverse transcriptase-like protein (368 aa).

A Reverse transcriptase domain is found at 91-318; sequence TRELTVPYWY…SELNWLGHKV (228 aa).

Its subcellular location is the mitochondrion. This is Reverse transcriptase-like protein (RTL) from Chlamydomonas reinhardtii (Chlamydomonas smithii).